We begin with the raw amino-acid sequence, 202 residues long: Small ribosomal subunit protein uS4 (202 aa).

The segment at 22–43 (TRKSARRAYPPGQHGQNRKKRS) is disordered. The S4 RNA-binding domain maps to 90-152 (MRLDNTVFRL…AQSRKLVEAN (63 aa)).

The protein belongs to the universal ribosomal protein uS4 family. As to quaternary structure, part of the 30S ribosomal subunit. Contacts protein S5. The interaction surface between S4 and S5 is involved in control of translational fidelity.

In terms of biological role, one of the primary rRNA binding proteins, it binds directly to 16S rRNA where it nucleates assembly of the body of the 30S subunit. Functionally, with S5 and S12 plays an important role in translational accuracy. In Nostoc punctiforme (strain ATCC 29133 / PCC 73102), this protein is Small ribosomal subunit protein uS4.